The primary structure comprises 645 residues: Serine/threonine-protein kinase Nek11 (645 aa).

Residues 29-287 form the Protein kinase domain; it reads YVLQQKLGSG…AIEILKIPYL (259 aa). ATP is bound by residues 35 to 43 and K61; that span reads LGSGSFGTV. The Proton acceptor role is filled by D158. S273 is subject to Phosphoserine; by CHEK1. A coiled-coil region spans residues 346 to 385; that stretch reads RLRKLQAADEKARKLKKIVEEKYEENSKRMQELRSRNFQQ. The segment at 399–445 is disordered; sequence GMEEKEEQPEGRLSCSPQDEDEERWQGREEESDEPTLENLPESQPIP.

The protein belongs to the protein kinase superfamily. NEK Ser/Thr protein kinase family. NIMA subfamily. Interacts with isoform 1 of NEK2. Requires Mn(2+) as cofactor. Mg(2+) serves as cofactor. Phosphorylated by NEK2. Phosphorylation at Ser-273 is important for its activation. Poorly expressed in cerebellum, trachea, lung, appendix, and uterus.

Its subcellular location is the nucleus. It localises to the nucleolus. The catalysed reaction is L-seryl-[protein] + ATP = O-phospho-L-seryl-[protein] + ADP + H(+). The enzyme catalyses L-threonyl-[protein] + ATP = O-phospho-L-threonyl-[protein] + ADP + H(+). Autorepressed by intramolecular binding of the C-terminus which dissociates following phosphorylation by NEK2 isoform 1 in G1/S-arrested cells. NEK2 isoform 2 is largely not present in the nucleolus, and does not appear to phosphorylate NEK11. Activated in response to DNA damage. Inhibited by zinc. In terms of biological role, protein kinase which plays an important role in the G2/M checkpoint response to DNA damage. Controls degradation of CDC25A by directly phosphorylating it on residues whose phosphorylation is required for BTRC-mediated polyubiquitination and degradation. The chain is Serine/threonine-protein kinase Nek11 from Homo sapiens (Human).